A 178-amino-acid polypeptide reads, in one-letter code: ATP-dependent protease subunit HslV (178 aa).

Residue Thr7 is part of the active site. The Na(+) site is built by Gly162, Cys165, and Thr168.

This sequence belongs to the peptidase T1B family. HslV subfamily. In terms of assembly, a double ring-shaped homohexamer of HslV is capped on each side by a ring-shaped HslU homohexamer. The assembly of the HslU/HslV complex is dependent on binding of ATP.

It localises to the cytoplasm. It carries out the reaction ATP-dependent cleavage of peptide bonds with broad specificity.. Its activity is regulated as follows. Allosterically activated by HslU binding. Protease subunit of a proteasome-like degradation complex believed to be a general protein degrading machinery. This is ATP-dependent protease subunit HslV from Cupriavidus metallidurans (strain ATCC 43123 / DSM 2839 / NBRC 102507 / CH34) (Ralstonia metallidurans).